A 3092-amino-acid polypeptide reads, in one-letter code: Inhibitory regulator protein IRA1 (3092 aa).

Disordered regions lie at residues histidine 375–leucine 430 and leucine 450–asparagine 487. A compositionally biased stretch (low complexity) spans serine 379–lysine 400. A compositionally biased stretch (polar residues) spans glutamine 401–leucine 430. Residues threonine 455–asparagine 487 show a composition bias toward low complexity. Residues serine 497 and serine 915 each carry the phosphoserine modification. 2 disordered regions span residues serine 946 to serine 988 and threonine 1003 to lysine 1023. A compositionally biased stretch (low complexity) spans glutamine 965–serine 988. Serine 1342 carries the phosphoserine modification. The 206-residue stretch at asparagine 1725–leucine 1930 folds into the Ras-GAP domain. Residues serine 1753 and serine 3004 each carry the phosphoserine; by PKA modification.

The protein localises to the cytoplasm. Functionally, inhibitory regulator of the Ras-cyclic AMP pathway in S.cerevisiae. Stimulates the GTPase activity of Ras proteins. This is Inhibitory regulator protein IRA1 (IRA1) from Saccharomyces cerevisiae (strain ATCC 204508 / S288c) (Baker's yeast).